We begin with the raw amino-acid sequence, 476 residues long: Cysteine--tRNA ligase (476 aa).

Cys29 is a Zn(2+) binding site. The 'HIGH' region motif lies at 31–41 (PTVYDYPHLGH). The Zn(2+) site is built by Cys209, His234, and Glu238. The short motif at 266–270 (KMSKS) is the 'KMSKS' region element. Lys269 is an ATP binding site.

The protein belongs to the class-I aminoacyl-tRNA synthetase family. Zn(2+) is required as a cofactor.

The protein resides in the cytoplasm. It carries out the reaction tRNA(Cys) + L-cysteine + ATP = L-cysteinyl-tRNA(Cys) + AMP + diphosphate. The polypeptide is Cysteine--tRNA ligase (Thermococcus gammatolerans (strain DSM 15229 / JCM 11827 / EJ3)).